The sequence spans 520 residues: Succinyl-CoA:3-ketoacid coenzyme A transferase 2A, mitochondrial (520 aa).

The N-terminal 39 residues, 1 to 39 (MAALRLLAWALPRGVSALRPPPALPHRLIRRYVSDRSGS), are a transit peptide targeting the mitochondrion. Residues 280-299 (ERLTTRDSKPAPGSKDNDPS) form a disordered region. The 5-glutamyl coenzyme A thioester intermediate role is filled by Glu-342.

Belongs to the 3-oxoacid CoA-transferase family. Homodimer.

It is found in the mitochondrion. It catalyses the reaction a 3-oxo acid + succinyl-CoA = a 3-oxoacyl-CoA + succinate. The protein operates within ketone metabolism; succinyl-CoA degradation; acetoacetyl-CoA from succinyl-CoA: step 1/1. In terms of biological role, key enzyme for ketone body catabolism. Transfers the CoA moiety from succinate to acetoacetate. Formation of the enzyme-CoA intermediate proceeds via an unstable anhydride species formed between the carboxylate groups of the enzyme and substrate. Probably play and important roles in the energy metabolism of spermatozoa. This Mus musculus (Mouse) protein is Succinyl-CoA:3-ketoacid coenzyme A transferase 2A, mitochondrial (Oxct2a).